A 585-amino-acid chain; its full sequence is uncharacterized protein (585 aa).

Positions Met1–Leu18 are enriched in polar residues. The tract at residues Met1 to Arg23 is disordered.

The protein belongs to the protein kinase superfamily. ADCK protein kinase family.

This is an uncharacterized protein from Synechocystis sp. (strain ATCC 27184 / PCC 6803 / Kazusa).